We begin with the raw amino-acid sequence, 807 residues long: Leucine--tRNA ligase (807 aa).

A 'HIGH' region motif is present at residues 40–51 (PYPSGQGLHVGH). Residues 575–579 (KMSKS) carry the 'KMSKS' region motif. Residue Lys578 coordinates ATP.

This sequence belongs to the class-I aminoacyl-tRNA synthetase family.

The protein resides in the cytoplasm. It carries out the reaction tRNA(Leu) + L-leucine + ATP = L-leucyl-tRNA(Leu) + AMP + diphosphate. The chain is Leucine--tRNA ligase from Latilactobacillus sakei subsp. sakei (strain 23K) (Lactobacillus sakei subsp. sakei).